Here is a 287-residue protein sequence, read N- to C-terminus: ATP synthase subunit a (287 aa).

6 helical membrane passes run 38–58 (DSMVLALLLGGLTLLILWTAA), 96–116 (FIAPLGLVVFVWVFLMNAMDM), 139–161 (VVPTADLSTTMGLALAVLGLRFW), 187–207 (PLFALILGLVNLLMQVIEYVA), 225–245 (LVFMLIALMGGAAALSLSGVL), and 259–279 (LFHILVITLQAFIFMMLALIY).

This sequence belongs to the ATPase A chain family. In terms of assembly, F-type ATPases have 2 components, CF(1) - the catalytic core - and CF(0) - the membrane proton channel. CF(1) has five subunits: alpha(3), beta(3), gamma(1), delta(1), epsilon(1). CF(0) has three main subunits: a(1), b(2) and c(9-12). The alpha and beta chains form an alternating ring which encloses part of the gamma chain. CF(1) is attached to CF(0) by a central stalk formed by the gamma and epsilon chains, while a peripheral stalk is formed by the delta and b chains.

It localises to the cell inner membrane. In terms of biological role, key component of the proton channel; it plays a direct role in the translocation of protons across the membrane. The protein is ATP synthase subunit a of Verminephrobacter eiseniae (strain EF01-2).